A 372-amino-acid polypeptide reads, in one-letter code: Probable leucine aminopeptidase MCYG_08380 (372 aa).

A signal peptide spans 1–19; the sequence is MKVSVLAAVAAFAAATAIA. N96 is a glycosylation site (N-linked (GlcNAc...) asparagine). 2 residues coordinate Zn(2+): H175 and D194. 2 N-linked (GlcNAc...) asparagine glycosylation sites follow: N195 and N219. 2 residues coordinate Zn(2+): E233 and D260. The cysteines at positions 305 and 309 are disulfide-linked. H338 provides a ligand contact to Zn(2+).

It belongs to the peptidase M28 family. M28E subfamily. Monomer. The cofactor is Zn(2+).

It localises to the secreted. In terms of biological role, probable extracellular aminopeptidase which contributes to pathogenicity. The chain is Probable leucine aminopeptidase MCYG_08380 from Arthroderma otae (strain ATCC MYA-4605 / CBS 113480) (Microsporum canis).